The sequence spans 273 residues: Putative phosphoenolpyruvate synthase regulatory protein (273 aa).

153-160 (GVSRSGKT) lines the ADP pocket.

It belongs to the pyruvate, phosphate/water dikinase regulatory protein family. PSRP subfamily.

It catalyses the reaction [pyruvate, water dikinase] + ADP = [pyruvate, water dikinase]-phosphate + AMP + H(+). It carries out the reaction [pyruvate, water dikinase]-phosphate + phosphate + H(+) = [pyruvate, water dikinase] + diphosphate. Its function is as follows. Bifunctional serine/threonine kinase and phosphorylase involved in the regulation of the phosphoenolpyruvate synthase (PEPS) by catalyzing its phosphorylation/dephosphorylation. In Variovorax paradoxus (strain S110), this protein is Putative phosphoenolpyruvate synthase regulatory protein.